The following is a 345-amino-acid chain: Phosphoribosylformylglycinamidine cyclo-ligase (345 aa).

Belongs to the AIR synthase family.

Its subcellular location is the cytoplasm. The enzyme catalyses 2-formamido-N(1)-(5-O-phospho-beta-D-ribosyl)acetamidine + ATP = 5-amino-1-(5-phospho-beta-D-ribosyl)imidazole + ADP + phosphate + H(+). The protein operates within purine metabolism; IMP biosynthesis via de novo pathway; 5-amino-1-(5-phospho-D-ribosyl)imidazole from N(2)-formyl-N(1)-(5-phospho-D-ribosyl)glycinamide: step 2/2. The polypeptide is Phosphoribosylformylglycinamidine cyclo-ligase (Shewanella woodyi (strain ATCC 51908 / MS32)).